The primary structure comprises 321 residues: Malate dehydrogenase (321 aa).

NAD(+) contacts are provided by residues 10–15 and Asp34; that span reads GGGQIG. Positions 83 and 89 each coordinate substrate. Residues Asn96 and 119–121 contribute to the NAD(+) site; that span reads ISN. Residues Asn121 and Arg152 each coordinate substrate. Residue His176 is the Proton acceptor of the active site.

Belongs to the LDH/MDH superfamily. MDH type 3 family.

The enzyme catalyses (S)-malate + NAD(+) = oxaloacetate + NADH + H(+). Catalyzes the reversible oxidation of malate to oxaloacetate. The protein is Malate dehydrogenase of Trichlorobacter lovleyi (strain ATCC BAA-1151 / DSM 17278 / SZ) (Geobacter lovleyi).